The sequence spans 554 residues: Valerianol synthase TPS1E (554 aa).

The Mg(2+) site is built by Asp-307 and Asp-311. Residues 326–330 (VQRWD) carry the DDXXD motif motif. Mg(2+) contacts are provided by Asp-452, Ser-456, and Glu-460.

This sequence belongs to the terpene synthase family. Mg(2+) serves as cofactor.

The enzyme catalyses (2E,6E)-farnesyl diphosphate + H2O = valerianol + diphosphate. The protein operates within secondary metabolite biosynthesis; terpenoid biosynthesis. Functionally, terpene synthase that catalyzes the biosynthesis of the terpene valerianol, which is a volatile compound of floral scent. This Camellia hiemalis (Camellia) protein is Valerianol synthase TPS1E.